Here is a 1124-residue protein sequence, read N- to C-terminus: Phytochrome type A (1124 aa).

Positions 1 to 19 are enriched in low complexity; sequence MSTTRPSQSSNNSGRSRNS. The disordered stretch occupies residues 1–21; that stretch reads MSTTRPSQSSNNSGRSRNSAR. One can recognise a GAF domain in the interval 218 to 401; that stretch reads SMERLCDTMV…VFAIHVNKEI (184 aa). A phytochromobilin-binding site is contributed by Cys-323. 2 PAS domains span residues 617–687 and 750–821; these read VTSE…LQGE and DYKA…VNFG. A Histidine kinase domain is found at 901-1120; the sequence is YMKRQIRNPL…ILSVELAAAH (220 aa).

The protein belongs to the phytochrome family. As to quaternary structure, homodimer. Contains one covalently linked phytochromobilin chromophore.

Functionally, regulatory photoreceptor which exists in two forms that are reversibly interconvertible by light: the Pr form that absorbs maximally in the red region of the spectrum and the Pfr form that absorbs maximally in the far-red region. Photoconversion of Pr to Pfr induces an array of morphogenic responses, whereas reconversion of Pfr to Pr cancels the induction of those responses. Pfr controls the expression of a number of nuclear genes including those encoding the small subunit of ribulose-bisphosphate carboxylase, chlorophyll A/B binding protein, protochlorophyllide reductase, rRNA, etc. It also controls the expression of its own gene(s) in a negative feedback fashion. The chain is Phytochrome type A (PHYA) from Lathyrus sativus (White vetchling).